Reading from the N-terminus, the 527-residue chain is Endogenous retrovirus group FC1 member 1 Env polyprotein (527 aa).

The tract at residues 1–411 is surface protein; that stretch reads MNSPCDRLQQ…EPRPQNKSKW (411 aa). The CXXC signature appears at 280–283; that stretch reads CFLC. The tract at residues 412 to 432 is fusion peptide; it reads AIFLPLVLGISLASSLVASGL. Residues 412–527 are transmembrane protein; sequence AIFLPLVLGI…LKKKKSSKRS (116 aa). Residues 477–493 carry the CKS-17 motif; that stretch reads AQNRQALDLLMAEKGRT. Residues Cys-494 and Cys-501 are joined by a disulfide bond. A CX6CC motif is present at residues 494 to 502; sequence CLFLQEECC.

It belongs to the gamma type-C retroviral envelope protein family. HERV class-I F(c)2 env subfamily. The CXXC motif is highly conserved across a broad range of retroviral envelope proteins. It is thought to participate in the formation of a labile disulfide bond possibly with the CX6CC motif present in the transmembrane domain. In terms of tissue distribution, low expression in skin and testis.

Its subcellular location is the virion. Functionally, retroviral envelope proteins mediate receptor recognition and membrane fusion during early infection. Endogenous envelope proteins may have kept, lost or modified their original function during evolution. This endogenous envelope protein has lost its original fusogenic properties. The chain is Endogenous retrovirus group FC1 member 1 Env polyprotein (ERVFC1-1) from Homo sapiens (Human).